The chain runs to 149 residues: Large ribosomal subunit protein uL22 (149 aa).

Belongs to the universal ribosomal protein uL22 family. In terms of assembly, part of the 50S ribosomal subunit.

Its function is as follows. This protein binds specifically to 23S rRNA. It makes multiple contacts with different domains of the 23S rRNA in the assembled 50S subunit and ribosome. The globular domain of the protein is located near the polypeptide exit tunnel on the outside of the subunit, while an extended beta-hairpin is found that lines the wall of the exit tunnel in the center of the 70S ribosome. The protein is Large ribosomal subunit protein uL22 of Picrophilus torridus (strain ATCC 700027 / DSM 9790 / JCM 10055 / NBRC 100828 / KAW 2/3).